Here is a 397-residue protein sequence, read N- to C-terminus: Serpin B10 (397 aa).

A Nuclear localization signal motif is present at residues 74-77 (KKRK).

This sequence belongs to the serpin family. Ov-serpin subfamily.

It is found in the nucleus. It localises to the cytoplasm. In terms of biological role, protease inhibitor that may play a role in the regulation of protease activities during hematopoiesis and apoptosis induced by TNF. May regulate protease activities in the cytoplasm and in the nucleus. The protein is Serpin B10 (SERPINB10) of Bos taurus (Bovine).